The sequence spans 203 residues: Small ribosomal subunit protein uS4 (203 aa).

The S4 RNA-binding domain occupies 93-156; it reads RRLDNVVYRL…MKVPAILEAV (64 aa).

This sequence belongs to the universal ribosomal protein uS4 family. As to quaternary structure, part of the 30S ribosomal subunit. Contacts protein S5. The interaction surface between S4 and S5 is involved in control of translational fidelity.

Functionally, one of the primary rRNA binding proteins, it binds directly to 16S rRNA where it nucleates assembly of the body of the 30S subunit. In terms of biological role, with S5 and S12 plays an important role in translational accuracy. The chain is Small ribosomal subunit protein uS4 from Streptococcus uberis (strain ATCC BAA-854 / 0140J).